A 366-amino-acid chain; its full sequence is Terpene synthase 4 (366 aa).

Residues 91 to 96 carry the DDxx(x)D/E motif motif; the sequence is DDFLER. The NDxxSxxxD/E motif signature appears at 241-249; the sequence is NDCVSYAKE.

It belongs to the terpene synthase family.

The catalysed reaction is (2E,6E)-farnesyl diphosphate = (1S,2S,4R)-beta-elemene + diphosphate. Functionally, terpene synthase that converts its substrate farnesyl diphosphate (FPP) into the sesquiterpenes bicycloelemene, beta-elemene and 2 yet unidentified sesquiterpenes. In Dictyostelium purpureum (Slime mold), this protein is Terpene synthase 4.